The primary structure comprises 8922 residues: Protein clarinet (8922 aa).

The interval 11-35 is disordered; it reads SKGPPLEEVREESEEDAQVPEQVVS. A compositionally biased stretch (acidic residues) spans 19 to 28; the sequence is VREESEEDAQ. Positions 385–405 form a coiled coil; it reads KDETKLILKSVEDKLETTEIE. 55 disordered regions span residues 527–579, 622–673, 687–860, 880–955, 971–1049, 1062–1139, 1151–1331, 1347–1420, 1444–1520, 1538–1619, 1632–1710, 1726–1801, 1820–1898, 1939–1992, 2032–2084, 2126–2175, 2194–2213, 2220–2246, 2329–2403, 2423–2497, 2516–2594, 2610–2684, 2704–2845, 2892–2963, 2983–3155, 3171–3249, 3268–3337, 3619–3639, 3995–4079, 4117–4169, 4181–4271, 4557–4624, 4636–4656, 4666–4685, 4730–4801, 4855–4899, 5004–5036, 5360–5379, 5390–5413, 5484–5511, 5540–5572, 6194–6303, 6354–6437, 6487–6510, 6577–6609, 6668–6691, 6728–6768, 6998–7018, 7045–7098, 7137–7175, 7202–7263, 7313–7350, 7598–7623, 7760–7797, and 7842–7881; these read QEAA…EPEL, IVIS…EPEL, LAEK…KEPE, SFEQ…EPEL, EQSS…EPEL, SSAE…MESR, IARI…EPEL, EQSS…VMES, SFEQ…PELT, SFEQ…EEID, SFEQ…LTQE, SFEQ…VPEL, VISE…LTQE, IVIS…SELT, IVIS…SKEP, QSSF…PVRL, IVIS…YDQD, SFEQ…KKPE, SFEQ…KPEL, SFEQ…KEPE, SFEQ…ERPF, SFEQ…MESK, SFEQ…PVML, SITP…PTTD, AEPV…QEEI, IVIS…PELT, SLAE…STTI, QASA…TQEE, EQSS…PVRL, SEQH…YERS, EQSS…GVTQ, PANP…PLQD, PEDF…NGLT, LAMF…RKES, RRSS…DTAL, KKQI…ENEV, PPIA…SQFG, AEPV…ESES, DVES…GSRM, SSKS…QIGI, ARFP…LDDL, NAET…SVAR, AEFE…VPPG, TERK…TSTS, ARSR…DDFD, FDGD…FEKP, EAPS…YPDR, KTTT…EIEE, DSVR…SPGM, TRRH…SRPT, and HIRQ…SSSV. A compositionally biased stretch (basic and acidic residues) spans 531–552; that stretch reads SDNHEKERSSATSKADYERSFD. A compositionally biased stretch (basic and acidic residues) spans 760–776; it reads MESKEPELTQEEIDHIA. The span at 1062–1076 shows a compositional bias: low complexity; it reads SSAEQSSFEQASTVP. Basic and acidic residues predominate over residues 1230 to 1244; sequence MESKEPELTQEEIDH. Positions 1251–1261 are enriched in polar residues; it reads IAEQSSFEQAS. Basic and acidic residues-rich tracts occupy residues 1606–1619 and 1700–1710; these read MESK…EEID and MESKEPELTQE. 2 stretches are compositionally biased toward basic and acidic residues: residues 1888-1898 and 1982-1992; these read MESKEPELTQE and MESKESELTQE. The segment covering 2194 to 2204 has biased composition (polar residues); it reads QSSFEQASTIT. The segment covering 2584-2594 has biased composition (basic and acidic residues); that stretch reads MESKEPELTQE. Residues 2772-2788 show a composition bias toward basic and acidic residues; sequence MESKEPELTQEEIDHIA. Residues 2793-2803 are compositionally biased toward polar residues; sequence LAEQSSFEQAS. Residues 3076-3085 are compositionally biased toward polar residues; sequence APSSSFEQAS. Polar residues predominate over residues 4035 to 4044; sequence GTSFPDNAET. The segment covering 4065–4079 has biased composition (basic and acidic residues); sequence PVMKSKEPELTQEEI. 3 stretches are compositionally biased toward polar residues: residues 4182–4195, 4223–4234, and 4255–4271; these read LAEQ…STIP, SATSGADYQQSF, and MEST…STTI. Over residues 4571 to 4580 the composition is skewed to basic and acidic residues; sequence IVEKREDDKS. Residues 4581–4594 are compositionally biased toward polar residues; the sequence is NITSGADYQQSFDQ. The segment covering 4613-4624 has biased composition (basic and acidic residues); it reads MESKEPELTQEE. A compositionally biased stretch (polar residues) spans 4636-4645; the sequence is EQSSFEQAST. The segment covering 4730 to 4739 has biased composition (polar residues); that stretch reads EQSSFEQAST. A compositionally biased stretch (low complexity) spans 4871 to 4890; it reads EGSSSATSGADIPSSFDISS. Over residues 5009-5023 the composition is skewed to polar residues; that stretch reads EATSGADTESISETT. The segment covering 5390 to 5407 has biased composition (low complexity); that stretch reads RRSSGADSRASNDSSASR. Over residues 5486–5499 the composition is skewed to polar residues; sequence QISSRTESTNSRVS. Over residues 5540–5550 the composition is skewed to pro residues; the sequence is PPIAISHPTPP. Positions 5560-5572 are enriched in low complexity; it reads RHSSGSSAHSQFG. Polar residues-rich tracts occupy residues 6225–6245 and 6270–6284; these read ASSG…TSGF and KTVS…MASR. Composition is skewed to basic and acidic residues over residues 6285–6303 and 6376–6422; these read KSSE…ESES and GEGE…EESL. Residues 6494–6505 are compositionally biased toward polar residues; sequence LGTSAPTKSIPS. The span at 6590–6600 shows a compositional bias: low complexity; it reads SPSVMSSSIMS. The segment covering 6670 to 6687 has biased composition (polar residues); the sequence is ETDSSSSVITSRQPSRSP. Residues 6735 to 6747 are compositionally biased toward low complexity; it reads SQVPSRQPSRSPS. Composition is skewed to basic and acidic residues over residues 6998–7008 and 7045–7069; these read TERKQREESPT and ARSR…HTPE. Residues 7071–7086 are compositionally biased toward low complexity; that stretch reads SSTAVVTDVPSVSPVT. A compositionally biased stretch (basic and acidic residues) spans 7155 to 7175; that stretch reads TTKKTSDFDFPKETDEVFEKP. Residues 7248 to 7260 are compositionally biased toward acidic residues; that stretch reads SDEESCSEDDEEY. The segment covering 7313-7331 has biased composition (low complexity); the sequence is KTTTSQTPSTSTKPTVTAP. Positions 7599–7609 are enriched in basic and acidic residues; it reads SVRDDNERNEN. Composition is skewed to low complexity over residues 7777–7788 and 7854–7880; these read SSASRPPSAAGS and AQTG…GSSS. Positions 7895 to 7915 form a coiled coil; that stretch reads KKELKDVLIQRKQRLEATEIE. A disordered region spans residues 8510–8562; the sequence is SRRRAQETALTSSNKISTGSRSYARRPIRPSSYRNPEATNSMPDRHVARRTAE. 2 stretches are compositionally biased toward polar residues: residues 8517 to 8530 and 8541 to 8551; these read TALT…TGSR and SYRNPEATNSM. Basic and acidic residues predominate over residues 8552 to 8562; it reads PDRHVARRTAE. The PDZ domain occupies 8570 to 8661; that stretch reads RILLTRSYKH…EIEMVIRTYK (92 aa). Positions 8714–8835 constitute a C2 domain; it reads CHGHIQVSLG…SAINTGPRWY (122 aa).

In terms of tissue distribution, expressed in the nervous system.

Its subcellular location is the synapse. It is found in the cell projection. The protein localises to the axon. Functionally, required for synapse development in the active zone of presynaptic terminals of specific neurons including serotonergic NSM neurons. The active zone is a protein-dense neuronal region within the presynaptic bouton, from which synaptic vesicles send neurotransmitter signals across the synapse. Plays a role in the recruitment and clustering of synaptic vesicles in the active zone of presynaptic terminals in serotonergic NSM neurons, and coordinates the release of synaptic vesicles at presynaptic terminals to regulate neurotransmission at neuromuscular junctions. Regulates synapse number in inhibitory motor neurons and plays a role in spontaneous postsynaptic synaptic vesicle release in muscle cells. The sequence is that of Protein clarinet from Caenorhabditis elegans.